The chain runs to 146 residues: UPF0178 protein BCG9842_B2187 (146 aa).

The protein belongs to the UPF0178 family.

In Bacillus cereus (strain G9842), this protein is UPF0178 protein BCG9842_B2187.